Here is a 192-residue protein sequence, read N- to C-terminus: MAAATTTLSSSSSSPSLTLINASHRFVSVTPFSSNSIFLRRRFRRLNRSLASSSSHSRRRYESDDRFFGGGDNYDVVPDDDGFSDDDDEEDERESSVDLLIRFLRSMFKKVSKRTKKASRRILPAAMSPRLVSFAVDGILLLGSLSITRAFLEVICNLGGTVFTVILLIRLFWAAASFFQTYGNSFGPNPVN.

The Nuclear localization signal signature appears at 43–50; sequence FRRLNRSL. Positions 70–92 are disordered; sequence GGDNYDVVPDDDGFSDDDDEEDE. A compositionally biased stretch (acidic residues) spans 77-92; that stretch reads VPDDDGFSDDDDEEDE. A run of 2 helical transmembrane segments spans residues 122–142 and 159–179; these read ILPA…ILLL and GGTV…ASFF.

Interacts with HY5 and COP1 in the nucleus. As to expression, expressed in young seedlings (e.g. hypocotyl and cotyledons) and in green tissues (e.g. leaves, stems, sepals, and young siliques).

The protein resides in the nucleus membrane. Its function is as follows. Negative regulator of photomorphogenesis modulating both light and abscisic acid (ABA) signaling pathways. Negatively regulates the light-mediated inhibition of hypocotyl elongation, probably in a PHYB-mediated signaling pathway, but promotes flowering time (especially in long days) and lateral root formation. Enhances light-regulated gene expression. Promotes COP1-mediated degradation of HY5 during seedling development (e.g. hypocotyl growth) through enhanced ubiquitination in the darkness. Also involved in root gravitropism. The chain is Protein SHORT HYPOCOTYL IN WHITE LIGHT 1 from Arabidopsis thaliana (Mouse-ear cress).